The chain runs to 555 residues: Glutamine--tRNA ligase (555 aa).

Residues 34 to 44 carry the 'HIGH' region motif; that stretch reads PEPNGYLHIGH. ATP is bound by residues 35–37 and 41–47; these read EPN and HIGHAKS. L-glutamine-binding residues include D67 and Y212. ATP contacts are provided by residues T231, 261 to 262, and 269 to 271; these read RL and MSK. A 'KMSKS' region motif is present at residues 268–272; the sequence is VMSKR. The interaction with tRNA stretch occupies residues 317-324; it reads TKQDNTIE.

The protein belongs to the class-I aminoacyl-tRNA synthetase family. In terms of assembly, monomer.

It is found in the cytoplasm. It catalyses the reaction tRNA(Gln) + L-glutamine + ATP = L-glutaminyl-tRNA(Gln) + AMP + diphosphate. This chain is Glutamine--tRNA ligase, found in Enterobacter sp. (strain 638).